The chain runs to 633 residues: Kelch-like protein diablo (633 aa).

A disordered region spans residues 1–62 (MGDLPGSTGG…ARLSHTSEKH (62 aa)). Over residues 7–25 (STGGGGGVGGGGNGGGGPT) the composition is skewed to gly residues. Over residues 26 to 45 (IAGTNGNSTTGPGSSTGSTG) the composition is skewed to low complexity. One can recognise a BTB domain in the interval 80–147 (CDVVLNVGGR…CYTAHIIVEE (68 aa)). Residues 182–284 (CLGIRAFADT…SPKFLVGTVG (103 aa)) enclose the BACK domain. Kelch repeat units follow at residues 331–377 (VLFA…VLND), 379–425 (LYAV…VLDG), 426–472 (FLYA…VLGG), 474–519 (LYAI…VFNN), 521–566 (IYAV…VVNG), and 567–613 (QLYA…VMRA).

The protein operates within protein modification; protein ubiquitination. Probable substrate-specific adapter of an E3 ubiquitin-protein ligase complex which mediates the ubiquitination and subsequent proteasomal degradation of target proteins. May have a role in synapse differentiation and growth. The protein is Kelch-like protein diablo of Drosophila ananassae (Fruit fly).